The sequence spans 477 residues: Methylenetetrahydrofolate--tRNA-(uracil-5-)-methyltransferase TrmFO (477 aa).

15 to 20 (GAGLAG) is an FAD binding site.

The protein belongs to the MnmG family. TrmFO subfamily. FAD is required as a cofactor.

It is found in the cytoplasm. The enzyme catalyses uridine(54) in tRNA + (6R)-5,10-methylene-5,6,7,8-tetrahydrofolate + NADH + H(+) = 5-methyluridine(54) in tRNA + (6S)-5,6,7,8-tetrahydrofolate + NAD(+). It catalyses the reaction uridine(54) in tRNA + (6R)-5,10-methylene-5,6,7,8-tetrahydrofolate + NADPH + H(+) = 5-methyluridine(54) in tRNA + (6S)-5,6,7,8-tetrahydrofolate + NADP(+). Its function is as follows. Catalyzes the folate-dependent formation of 5-methyl-uridine at position 54 (M-5-U54) in all tRNAs. The polypeptide is Methylenetetrahydrofolate--tRNA-(uracil-5-)-methyltransferase TrmFO (Rhodopseudomonas palustris (strain BisB5)).